A 425-amino-acid chain; its full sequence is Serine--tRNA ligase (425 aa).

231–233 (TAE) is a binding site for L-serine. 262–264 (RSE) contributes to the ATP binding site. Residue Glu285 coordinates L-serine. 349-352 (EISS) lines the ATP pocket. Residue Ser385 coordinates L-serine.

Belongs to the class-II aminoacyl-tRNA synthetase family. Type-1 seryl-tRNA synthetase subfamily. As to quaternary structure, homodimer. The tRNA molecule binds across the dimer.

It localises to the cytoplasm. It carries out the reaction tRNA(Ser) + L-serine + ATP = L-seryl-tRNA(Ser) + AMP + diphosphate + H(+). The enzyme catalyses tRNA(Sec) + L-serine + ATP = L-seryl-tRNA(Sec) + AMP + diphosphate + H(+). It functions in the pathway aminoacyl-tRNA biosynthesis; selenocysteinyl-tRNA(Sec) biosynthesis; L-seryl-tRNA(Sec) from L-serine and tRNA(Sec): step 1/1. In terms of biological role, catalyzes the attachment of serine to tRNA(Ser). Is also able to aminoacylate tRNA(Sec) with serine, to form the misacylated tRNA L-seryl-tRNA(Sec), which will be further converted into selenocysteinyl-tRNA(Sec). The polypeptide is Serine--tRNA ligase (Bartonella quintana (strain Toulouse) (Rochalimaea quintana)).